A 416-amino-acid chain; its full sequence is Imidazolonepropionase (416 aa).

Fe(3+) contacts are provided by His-81 and His-83. 2 residues coordinate Zn(2+): His-81 and His-83. Residues Arg-90, Tyr-153, and His-186 each contribute to the 4-imidazolone-5-propanoate site. Tyr-153 contributes to the N-formimidoyl-L-glutamate binding site. Fe(3+) is bound at residue His-251. His-251 lines the Zn(2+) pocket. Residue Gln-254 participates in 4-imidazolone-5-propanoate binding. Residue Asp-326 participates in Fe(3+) binding. Residue Asp-326 participates in Zn(2+) binding. N-formimidoyl-L-glutamate-binding residues include Asn-328 and Gly-330. Thr-331 contacts 4-imidazolone-5-propanoate.

Belongs to the metallo-dependent hydrolases superfamily. HutI family. The cofactor is Zn(2+). Fe(3+) is required as a cofactor.

It localises to the cytoplasm. It carries out the reaction 4-imidazolone-5-propanoate + H2O = N-formimidoyl-L-glutamate. Its pathway is amino-acid degradation; L-histidine degradation into L-glutamate; N-formimidoyl-L-glutamate from L-histidine: step 3/3. Its function is as follows. Catalyzes the hydrolytic cleavage of the carbon-nitrogen bond in imidazolone-5-propanoate to yield N-formimidoyl-L-glutamate. It is the third step in the universal histidine degradation pathway. In Paracidovorax citrulli (strain AAC00-1) (Acidovorax citrulli), this protein is Imidazolonepropionase.